We begin with the raw amino-acid sequence, 167 residues long: Golgin subfamily A member 7B (167 aa).

2 S-palmitoyl cysteine lipidation sites follow: Cys78 and Cys81. The tract at residues 140 to 167 is disordered; it reads RCSSGSSSSGSSSGSGSSSAGGGGAGAR. Low complexity predominate over residues 142-157; sequence SSGSSSSGSSSGSGSS. The segment covering 158 to 167 has biased composition (gly residues); it reads SAGGGGAGAR.

The protein belongs to the ERF4 family. In terms of processing, palmitoylated by ZDHHC5. Palmitoylation is required for the maintenance of ZDHHC5 at the plasma membrane.

It is found in the cell membrane. It localises to the golgi apparatus membrane. Functionally, play a role in cell adhesion by regulating the plasma membrane localization of the palmitoyltransferase ZDHHC5. May be involved in protein transport from Golgi to cell surface. This chain is Golgin subfamily A member 7B (GOLGA7B), found in Mus musculus (Mouse).